The following is a 328-amino-acid chain: Twinfilin (328 aa).

An ADF-H 1 domain is found at 1-137; sequence MSASVELKPT…DYQQIMKSLS (137 aa). Position 143 is a phosphoserine (serine 143). Positions 173 to 304 constitute an ADF-H 2 domain; sequence GVAMSIDDKA…TEKEILHAAG (132 aa). The tract at residues 302–328 is disordered; it reads AAGISSPQAETSTTKTGFSRPRPPRRR. Residues 306 to 318 are compositionally biased toward polar residues; it reads SSPQAETSTTKTG.

The protein belongs to the actin-binding proteins ADF family. Twinfilin subfamily. As to quaternary structure, interacts with G-actin; ADP-actin form.

It localises to the cytoplasm. It is found in the cytoskeleton. In terms of biological role, actin-binding protein involved in motile and morphological processes. Inhibits actin polymerization, likely by sequestering G-actin. Prevents actin filament assembly by forming a 1:1 complex with actin monomers, and inhibits the nucleotide exchange reaction of actin monomers. The protein is Twinfilin (twf1) of Schizosaccharomyces pombe (strain 972 / ATCC 24843) (Fission yeast).